The chain runs to 217 residues: Phosphoribosylformylglycinamidine synthase subunit PurQ (217 aa).

A Glutamine amidotransferase type-1 domain is found at 2–217 (NIGIIVFPGS…GKSILSTLLS (216 aa)). C86 serves as the catalytic Nucleophile. Active-site residues include H194 and E196.

Part of the FGAM synthase complex composed of 1 PurL, 1 PurQ and 2 PurS subunits.

The protein resides in the cytoplasm. It catalyses the reaction N(2)-formyl-N(1)-(5-phospho-beta-D-ribosyl)glycinamide + L-glutamine + ATP + H2O = 2-formamido-N(1)-(5-O-phospho-beta-D-ribosyl)acetamidine + L-glutamate + ADP + phosphate + H(+). The catalysed reaction is L-glutamine + H2O = L-glutamate + NH4(+). The protein operates within purine metabolism; IMP biosynthesis via de novo pathway; 5-amino-1-(5-phospho-D-ribosyl)imidazole from N(2)-formyl-N(1)-(5-phospho-D-ribosyl)glycinamide: step 1/2. Its function is as follows. Part of the phosphoribosylformylglycinamidine synthase complex involved in the purines biosynthetic pathway. Catalyzes the ATP-dependent conversion of formylglycinamide ribonucleotide (FGAR) and glutamine to yield formylglycinamidine ribonucleotide (FGAM) and glutamate. The FGAM synthase complex is composed of three subunits. PurQ produces an ammonia molecule by converting glutamine to glutamate. PurL transfers the ammonia molecule to FGAR to form FGAM in an ATP-dependent manner. PurS interacts with PurQ and PurL and is thought to assist in the transfer of the ammonia molecule from PurQ to PurL. In Prochlorococcus marinus (strain NATL2A), this protein is Phosphoribosylformylglycinamidine synthase subunit PurQ.